A 119-amino-acid chain; its full sequence is Beta-2-microglobulin (119 aa).

A signal peptide spans 1–20; the sequence is MARFVVVPLLVLVSLFGLEA. In terms of domain architecture, Ig-like C1-type spans 25–114; the sequence is PKIQVYSRYP…VTFSTPKTVK (90 aa). The cysteines at positions 45 and 100 are disulfide-linked.

Belongs to the beta-2-microglobulin family. In terms of assembly, heterodimer of an alpha chain and a beta chain. Beta-2-microglobulin is the beta-chain of major histocompatibility complex class I molecules.

The protein resides in the secreted. In terms of biological role, component of the class I major histocompatibility complex (MHC). Involved in the presentation of peptide antigens to the immune system. The chain is Beta-2-microglobulin (B2M) from Saguinus oedipus (Cotton-top tamarin).